A 121-amino-acid chain; its full sequence is Somatostatin-1 (121 aa).

The first 24 residues, 1 to 24 (MKMVSSSRLRCLLVLLLSLTASIS), serve as a signal peptide directing secretion. The propeptide occupies 25-105 (CSFAGQRDSK…SGGPLLAPRE (81 aa)). The disordered stretch occupies residues 76 to 99 (NFPLAEGGPEDAHADLERAASGGP). A disulfide bond links cysteine 110 and cysteine 121.

This sequence belongs to the somatostatin family.

It is found in the secreted. In terms of biological role, somatostatin inhibits the release of somatotropin. This Lophius americanus (American angler) protein is Somatostatin-1 (sst1).